Reading from the N-terminus, the 239-residue chain is Insulin-like growth factor-binding protein 3 receptor (239 aa).

The N-terminal stretch at 1 to 38 (MGSCQAGHYLHFCLAHHPPLVCATLILLLLGLSGLGLG) is a signal peptide. The Extracellular portion of the chain corresponds to 39-205 (GFLLTHRTDL…EELTLCGSRL (167 aa)). 2 N-linked (GlcNAc...) asparagine glycosylation sites follow: N101 and N167. The chain crosses the membrane as a helical span at residues 206–226 (LVLGFFLILFCGLCCLTAACF). At 227–239 (HPRRESHWSRTRL) the chain is on the cytoplasmic side.

In terms of assembly, interacts with IGFBP3. Interacts with CASP8.

The protein resides in the cell membrane. Functionally, cell death receptor specific for IGFBP3, may mediate caspase-8-dependent apoptosis upon ligand binding. The protein is Insulin-like growth factor-binding protein 3 receptor (TMEM219) of Bos taurus (Bovine).